Here is a 609-residue protein sequence, read N- to C-terminus: Serine/threonine-protein phosphatase 4 regulatory subunit 2 (609 aa).

Ser-68 is subject to Phosphoserine. The tract at residues 175 to 569 (NNNGNADEGS…EEARVSPSAT (395 aa)) is disordered. Positions 183-194 (GSSPGAGSAGCA) are enriched in low complexity. Over residues 201–225 (RSDDNDQPKAKKAKLEIDGEERSEA) the composition is skewed to basic and acidic residues. Phosphoserine is present on residues Ser-223 and Ser-226. The span at 233-244 (VATRVKNEKDEK) shows a compositional bias: basic and acidic residues. A Phosphoserine modification is found at Ser-252. The segment covering 258–270 (EIEEPDEEVDEAD) has biased composition (acidic residues). Composition is skewed to basic and acidic residues over residues 310 to 351 (IEAE…KPDG) and 375 to 400 (EPVK…KQDD). The span at 401–410 (IDSTETDDAP) shows a compositional bias: acidic residues. Positions 414 to 462 (KPAEEKIASSESKPKTKSEDDPEAETKKSQPEKTETEAAEKSVSDEKQA) are enriched in basic and acidic residues. A Phosphothreonine modification is found at Thr-602. Ser-603 bears the Phosphoserine mark.

This sequence belongs to the PPP4R2 family. As to quaternary structure, serine/threonine-protein phosphatase 4 (PP4) occurs in different assemblies of the catalytic and one or more regulatory subunits. Probably part of a PP4 PPP4C-PPP4R2-PPP4R3 complex containing Pp4-19C, PPP4R2r and flfl.

Functionally, regulatory subunit of serine/threonine-protein phosphatase 4 (PP4). The probable PP4 complex Pp4-19C-PPP4R2r-flfl (PPP4C-PPP4R2-PPP4R3) is required to prevent caspase induced cell death (in vitro). In Drosophila melanogaster (Fruit fly), this protein is Serine/threonine-protein phosphatase 4 regulatory subunit 2 (PPP4R2r).